A 306-amino-acid polypeptide reads, in one-letter code: Polyadenylate-binding protein 2 (306 aa).

A compositionally biased stretch (low complexity) spans 1 to 12 (MAAAAAAAAAAG). The interval 1 to 115 (MAAAAAAAAA…EGDPGDGAIE (115 aa)) is disordered. At alanine 2 the chain carries N-acetylalanine. The tract at residues 2–145 (AAAAAAAAAA…LKELQNEVEK (144 aa)) is interaction with SKIP. Arginine 17 carries the omega-N-methylarginine modification. A Phosphoserine modification is found at serine 19. Gly residues predominate over residues 30–47 (GAGGEAGEGAPGGAGDYG). Residues 51–72 (ESEELEPEELLLEPEPEPEPEE) are compositionally biased toward acidic residues. At serine 52 the chain carries Phosphoserine. The segment covering 77 to 87 (PRAPPGAPGPG) has biased composition (pro residues). A coiled-coil region spans residues 115–151 (EDPELEAIKARVREMEEEAEKLKELQNEVEKQMNMSP). The segment at 119–147 (LEAIKARVREMEEEAEKLKELQNEVEKQM) is stimulates PAPOLA. Serine 150 and serine 235 each carry phosphoserine. Residues 155-306 (NAGPVIMSIE…ARATSWYSPY (152 aa)) are necessary for homooligomerization. Residues 172–249 (RSIYVGNVDY…RQIKVIPKRT (78 aa)) form the RRM domain. An asymmetric dimethylarginine; alternate mark is found at arginine 238, arginine 259, and arginine 263. Residues arginine 238, arginine 259, and arginine 263 each carry the omega-N-methylarginine; alternate modification. An asymmetric dimethylarginine mark is found at arginine 265, arginine 267, arginine 269, arginine 277, arginine 279, arginine 287, arginine 289, arginine 291, arginine 294, arginine 296, and arginine 298. The interaction with PAPOLA stretch occupies residues 286-306 (SRPRGRVYRGRARATSWYSPY).

In terms of assembly, monomer and homooligomer. Binds RNA as a monomer and oligomerizes when bound to poly(A). Associates in a ternary complex with CPSF4 and NS/NS1 and interaction with NS/NS1, blocks nuclear export of host cell mRNAs. Associates in a single complex with SKIP and MYOD1 and interacts with SKIP in differentiated myocytes. Interacts with NUDT21/CPSF5. Identified in a IGF2BP1-dependent mRNP granule complex containing untranslated mRNAs. Interacts with PAPOLA, but only in presence of oligo(A) RNA. Interacts with transportin. May interact with SETX. Interacts (via RRM domain and C-terminal arginine-rich region) with ZFP36 (via hypophosphorylated form); this interaction occurs in the nucleus in a RNA-independent manner, decreases in presence of single-stranded poly(A) RNA-oligomer and in a p38-dependent-manner and may down-regulated RNA poly(A) polymerase activity. Component of the poly(A) tail exosome targeting (PAXT) complex composed of PABPN1, ZFC3H1 and MTREX. Interacts with ZFC3H1 in a RNase-insensitive manner. Interacts with FRG1. Interacts with ZC3H11A. In terms of processing, arginine dimethylation is asymmetric and involves PRMT1 and PRMT3. It does not influence the RNA binding properties. As to expression, ubiquitous.

It localises to the nucleus. It is found in the cytoplasm. The protein resides in the nucleus speckle. Functionally, involved in the 3'-end formation of mRNA precursors (pre-mRNA) by the addition of a poly(A) tail of 200-250 nt to the upstream cleavage product. Stimulates poly(A) polymerase (PAPOLA) conferring processivity on the poly(A) tail elongation reaction and also controls the poly(A) tail length. Increases the affinity of poly(A) polymerase for RNA. Is also present at various stages of mRNA metabolism including nucleocytoplasmic trafficking and nonsense-mediated decay (NMD) of mRNA. Cooperates with SKIP to synergistically activate E-box-mediated transcription through MYOD1 and may regulate the expression of muscle-specific genes. Binds to poly(A) and to poly(G) with high affinity. May protect the poly(A) tail from degradation. Subunit of the trimeric poly(A) tail exosome targeting (PAXT) complex, a complex that directs a subset of long and polyadenylated poly(A) RNAs for exosomal degradation. The RNA exosome is fundamental for the degradation of RNA in eukaryotic nuclei. Substrate targeting is facilitated by its cofactor MTREX, which links to RNA-binding protein adapters. This is Polyadenylate-binding protein 2 (PABPN1) from Bos taurus (Bovine).